We begin with the raw amino-acid sequence, 175 residues long: Alpha-crystallin B chain (175 aa).

Met1 carries the post-translational modification N-acetylmethionine. The residue at position 19 (Ser19) is a Phosphoserine. O-linked (GlcNAc) serine glycosylation occurs at Ser41. Phosphoserine is present on residues Ser45 and Ser59. A sHSP domain is found at Arg56–Glu164. His83 contacts Zn(2+). Residue Lys92 is modified to N6-acetyllysine. The Zn(2+) site is built by His104, Glu106, His111, and His119. A disordered region spans residues Val142 to Lys175. The residue at position 166 (Lys166) is an N6-acetyllysine. Residue Thr170 is glycosylated (O-linked (GlcNAc) threonine).

It belongs to the small heat shock protein (HSP20) family. Heteromer composed of three CRYAA and one CRYAB subunits. Aggregates with homologous proteins, including the small heat shock protein HSPB1, to form large heteromeric complexes. Inter-subunit bridging via zinc ions enhances stability, which is crucial as there is no protein turn over in the lens. Interacts with HSPBAP1 and TTN/titin. Interacts with TMEM109; in the cellular response to DNA damage. Interacts with DES; binds rapidly during early stages of DES filament assembly and a reduced binding seen in the later stages. Interacts with TMED10; the interaction mediates the translocation from the cytoplasm into the ERGIC (endoplasmic reticulum-Golgi intermediate compartment) and thereby secretion. Interacts with ATP6V1A and with MTOR, forming a ternary complex.

The protein resides in the cytoplasm. It is found in the nucleus. The protein localises to the secreted. It localises to the lysosome. Its function is as follows. May contribute to the transparency and refractive index of the lens. Has chaperone-like activity, preventing aggregation of various proteins under a wide range of stress conditions. In lens epithelial cells, stabilizes the ATP6V1A protein, preventing its degradation by the proteasome. This chain is Alpha-crystallin B chain (CRYAB), found in Macaca fascicularis (Crab-eating macaque).